A 142-amino-acid chain; its full sequence is MKSFSAKITSIKKNWYCIDATNKILGRLASQVSIFLRGKNKPEFTPHIDVGDYIIIINASKIVVTGNKEKNKFYYHHSGYVGGIKKYTFKYMMLHHPTRIIKKAIKGMLPKGSLGQKIFKKLKVFPFNQHNLISQKPVFLNI.

The protein belongs to the universal ribosomal protein uL13 family. In terms of assembly, part of the 50S ribosomal subunit.

This protein is one of the early assembly proteins of the 50S ribosomal subunit, although it is not seen to bind rRNA by itself. It is important during the early stages of 50S assembly. The sequence is that of Large ribosomal subunit protein uL13 from Buchnera aphidicola subsp. Cinara cedri (strain Cc).